Here is a 512-residue protein sequence, read N- to C-terminus: 2-isopropylmalate synthase (512 aa).

Positions I4–K266 constitute a Pyruvate carboxyltransferase domain. Mn(2+)-binding residues include D13, H201, H203, and N237. The segment at E390–K512 is regulatory domain.

This sequence belongs to the alpha-IPM synthase/homocitrate synthase family. LeuA type 1 subfamily. Homodimer. Mn(2+) is required as a cofactor.

The protein resides in the cytoplasm. The catalysed reaction is 3-methyl-2-oxobutanoate + acetyl-CoA + H2O = (2S)-2-isopropylmalate + CoA + H(+). Its pathway is amino-acid biosynthesis; L-leucine biosynthesis; L-leucine from 3-methyl-2-oxobutanoate: step 1/4. Its function is as follows. Catalyzes the condensation of the acetyl group of acetyl-CoA with 3-methyl-2-oxobutanoate (2-ketoisovalerate) to form 3-carboxy-3-hydroxy-4-methylpentanoate (2-isopropylmalate). This is 2-isopropylmalate synthase from Listeria welshimeri serovar 6b (strain ATCC 35897 / DSM 20650 / CCUG 15529 / CIP 8149 / NCTC 11857 / SLCC 5334 / V8).